The following is a 442-amino-acid chain: Histidinol dehydrogenase (442 aa).

Tyrosine 138, glutamine 199, and asparagine 222 together coordinate NAD(+). Serine 245, glutamine 267, and histidine 270 together coordinate substrate. Glutamine 267 and histidine 270 together coordinate Zn(2+). Active-site proton acceptor residues include glutamate 335 and histidine 336. Substrate contacts are provided by histidine 336, aspartate 369, glutamate 423, and histidine 428. Residue aspartate 369 coordinates Zn(2+). Histidine 428 contacts Zn(2+).

It belongs to the histidinol dehydrogenase family. It depends on Zn(2+) as a cofactor.

It catalyses the reaction L-histidinol + 2 NAD(+) + H2O = L-histidine + 2 NADH + 3 H(+). It participates in amino-acid biosynthesis; L-histidine biosynthesis; L-histidine from 5-phospho-alpha-D-ribose 1-diphosphate: step 9/9. In terms of biological role, catalyzes the sequential NAD-dependent oxidations of L-histidinol to L-histidinaldehyde and then to L-histidine. The chain is Histidinol dehydrogenase from Ralstonia nicotianae (strain ATCC BAA-1114 / GMI1000) (Ralstonia solanacearum).